The sequence spans 329 residues: Methionyl-tRNA formyltransferase (329 aa).

117-120 (SLLP) contributes to the (6S)-5,6,7,8-tetrahydrofolate binding site.

Belongs to the Fmt family.

It catalyses the reaction L-methionyl-tRNA(fMet) + (6R)-10-formyltetrahydrofolate = N-formyl-L-methionyl-tRNA(fMet) + (6S)-5,6,7,8-tetrahydrofolate + H(+). Attaches a formyl group to the free amino group of methionyl-tRNA(fMet). The formyl group appears to play a dual role in the initiator identity of N-formylmethionyl-tRNA by promoting its recognition by IF2 and preventing the misappropriation of this tRNA by the elongation apparatus. This chain is Methionyl-tRNA formyltransferase, found in Paracidovorax citrulli (strain AAC00-1) (Acidovorax citrulli).